Here is a 445-residue protein sequence, read N- to C-terminus: Putative aldehyde dehydrogenase AldX (445 aa).

Catalysis depends on residues glutamate 214 and cysteine 248.

The protein belongs to the aldehyde dehydrogenase family.

It catalyses the reaction an aldehyde + NAD(+) + H2O = a carboxylate + NADH + 2 H(+). In Bacillus subtilis (strain 168), this protein is Putative aldehyde dehydrogenase AldX (aldX).